The following is a 339-amino-acid chain: MQQQAISEIQAAETLDALQAVKTKYVGKSGLVTRELGSLGKLPPEERKARGAEINTVRQAIDAALTEREGVLKRAALDARLASEAIDVTLPGLPLPAGGLHPINRVYEDLTGIYERMGYAVIEGPEVEDEHHNFEALNVPWYHPARDLQDTFWLEDGRLLRTHTSPMQIRYMVDHEPPLKIVVRGKVYRYEATDATHEAMFHQLEGLVVGDGISMADLKGTIAEMARGLYGPSAKVRFQPSYYPFVEPGADFAVWWDNPRGESKWLELGGCGMVHPNVFRAVDDLREAQGKPRIYEGKTGFAFGLGPERIAMLKYGIPDIRYFYANDPRVIGQFRGELG.

Glutamate 247 contributes to the Mg(2+) binding site.

This sequence belongs to the class-II aminoacyl-tRNA synthetase family. Phe-tRNA synthetase alpha subunit type 1 subfamily. As to quaternary structure, tetramer of two alpha and two beta subunits. Mg(2+) is required as a cofactor.

It localises to the cytoplasm. It catalyses the reaction tRNA(Phe) + L-phenylalanine + ATP = L-phenylalanyl-tRNA(Phe) + AMP + diphosphate + H(+). This chain is Phenylalanine--tRNA ligase alpha subunit, found in Deinococcus deserti (strain DSM 17065 / CIP 109153 / LMG 22923 / VCD115).